Here is a 244-residue protein sequence, read N- to C-terminus: MSRLAECTISDTVDELVQRAKLAEQAERYDDMAGACKTMAKMRNELNNEEANLLSVAYKNVVGARRSSWRIMSSIAKKQAGTPLAHQHDIYLKKVEEELIQICNDVLALPVLPITEKIGAEAKIFYYKMMGDYYRYSAEVQEGEQNDKSTEAAEEANQKATSLAEAELSVTHPIRLGLALNFSVFYYEIKNMPEKACSLAKAAFDAAITEVDSIKDETYKDSTLIMQLLRDNLTLWNSECETDS.

It belongs to the 14-3-3 family.

This is 14-3-3 protein homolog 1 from Echinococcus granulosus (Hydatid tapeworm).